The following is a 518-amino-acid chain: Serine--tRNA ligase, mitochondrial (518 aa).

The N-terminal 34 residues, 1–34 (MAASIVRRLGPLVAGRGLRLRGGCVCNQSFKRSF), are a transit peptide targeting the mitochondrion. Residue Lys110 is modified to N6-acetyllysine. At Lys195 the chain carries N6-succinyllysine. An L-serine-binding site is contributed by 299 to 301 (TAE). 330–332 (RAE) provides a ligand contact to ATP. Lys337 carries the post-translational modification N6-succinyllysine. Val345 serves as a coordination point for ATP. An L-serine-binding site is contributed by Glu352. 418 to 421 (EVTS) provides a ligand contact to ATP. Thr453 serves as a coordination point for L-serine. The segment at 497–518 (PLQYIGPNQPQKPRLPGQPASS) is disordered.

This sequence belongs to the class-II aminoacyl-tRNA synthetase family. Type-1 seryl-tRNA synthetase subfamily. In terms of assembly, homodimer. The tRNA molecule probably binds across the dimer. Two N-termini starting at positions 35 and 37 have been identified by direct sequencing.

It localises to the mitochondrion matrix. The catalysed reaction is tRNA(Ser) + L-serine + ATP = L-seryl-tRNA(Ser) + AMP + diphosphate + H(+). The enzyme catalyses tRNA(Sec) + L-serine + ATP = L-seryl-tRNA(Sec) + AMP + diphosphate + H(+). The protein operates within aminoacyl-tRNA biosynthesis; selenocysteinyl-tRNA(Sec) biosynthesis; L-seryl-tRNA(Sec) from L-serine and tRNA(Sec): step 1/1. Its function is as follows. Catalyzes the attachment of serine to tRNA(Ser). Is also probably able to aminoacylate tRNA(Sec) with serine, to form the misacylated tRNA L-seryl-tRNA(Sec), which will be further converted into selenocysteinyl-tRNA(Sec). This Bos taurus (Bovine) protein is Serine--tRNA ligase, mitochondrial (SARS2).